The chain runs to 170 residues: Cathelicidin antimicrobial peptide (170 aa).

The signal sequence occupies residues 1–30 (MKTQRDGPSLGRWSLVLLLLGLTMPLAITA). A propeptide spans 31–131 (QVLSYQEAVL…DISCDKDERK (101 aa)) (cathelin-like domain (CLD)). Cystine bridges form between Cys-86–Cys-97 and Cys-108–Cys-125. The segment at 150–162 (FKKIGQKINDFLG) is active core.

Belongs to the cathelicidin family. In terms of assembly, monomer, homodimer or homotrimer (in vitro). Oligomerizes as tetra- or hexamer in solution (in vitro). Proteolytically cleaved by proteinase PRTN3 into antibacterial peptide LL-37. Proteolytically cleaved by cathepsin CTSG and neutrophil elastase ELANE. In terms of processing, resistant to proteolytic degradation in solution, and when bound to both zwitterionic (mimicking mammalian membranes) and negatively charged membranes (mimicking bacterial membranes). Post-translationally, after secretion onto the skin surface, the CAMP gene product is processed by a serine protease-dependent mechanism into multiple novel antimicrobial peptides distinct from and shorter than cathelicidin LL-37. These peptides show enhanced antimicrobial action, acquiring the ability to kill skin pathogens such as S.aureus, E.coli and C.albicans. These peptides have lost the ability to stimulate CXCL8/IL8 release from keratinocytes. The peptides act synergistically, killing bacteria at lower concentrations when present together, and maintain activity at increased salt condition.

It localises to the secreted. It is found in the vesicle. Antimicrobial protein that is an integral component of the innate immune system. Binds to bacterial lipopolysaccharides (LPS). Acts via neutrophil N-formyl peptide receptors to enhance the release of CXCL2. Postsecretory processing generates multiple cathelicidin antimicrobial peptides with various lengths which act as a topical antimicrobial defense in sweat on skin. The unprocessed precursor form, cathelicidin antimicrobial peptide, inhibits the growth of Gram-negative E.coli and E.aerogenes with efficiencies comparable to that of the mature peptide LL-37 (in vitro). Functionally, antimicrobial peptide that is an integral component of the innate immune system. Binds to bacterial lipopolysaccharides (LPS). Causes membrane permeabilization by forming transmembrane pores (in vitro). Causes lysis of E.coli. Exhibits antimicrobial activity against Gram-negative bacteria such as P.aeruginosa, S.typhimurium, E.aerogenes, E.coli and P.syringae, Gram-positive bacteria such as L.monocytogenes, S.epidermidis, S.pyogenes and S.aureus, as well as vancomycin-resistant enterococci (in vitro). Exhibits antimicrobial activity against methicillin-resistant S.aureus, P.mirabilis, and C.albicans in low-salt media, but not in media containing 100 mM NaCl (in vitro). Forms chiral supramolecular assemblies with quinolone signal (PQS) molecules of P.aeruginosa, which may lead to interference of bacterial quorum signaling and perturbance of bacterial biofilm formation. May form supramolecular fiber-like assemblies on bacterial membranes. Induces cytokine and chemokine producation as well as TNF/TNFA and CSF2/GMCSF production in normal human keratinocytes. Exhibits hemolytic activity against red blood cells. In terms of biological role, exhibits antimicrobial activity against E.coli and B.megaterium (in vitro). This chain is Cathelicidin antimicrobial peptide, found in Cebus capucinus (White-faced sapajou).